Here is a 545-residue protein sequence, read N- to C-terminus: Tripartite motif-containing protein 55 (545 aa).

The segment at 26-82 (CPICLEMFTKPVVILPCQHNLCRKCASDIFQASNPYLPTRGGTTVASGGRFRCPSCR) adopts an RING-type zinc-finger fold. Residues 119–161 (LDQPMCEEHEEERINIYCLNCEVPTCSLCKVFGAHKDCQVAPL) form a B box-type zinc finger. 4 residues coordinate Zn(2+): Cys-124, His-127, Cys-147, and His-153. The stretch at 219 to 258 (YSILEERKTEMTQAITRTQEEKLEHVRTLIRKYSDHLENV) forms a coiled coil. Positions 269 to 327 (MDEPEMAVFLQNAKTLLQKITEASKAFQMEKIEQGYEIMNNFTVNLNREEKIIREIDFS) constitute a COS domain. 2 disordered regions span residues 324–378 (IDFS…SELA) and 406–528 (LVTQ…GADS). Over residues 328-355 (REEEDEDDEGEVDEEGEGEDAVEVEEAE) the composition is skewed to acidic residues. Composition is skewed to low complexity over residues 417–426 (SQQTTQSETS) and 469–493 (SAAEDSSVQSAEVAEAAANEQAAVS). A compositionally biased stretch (polar residues) spans 495–506 (KESSSTAATSQI). Residues 510-520 (ASSPQGQAAAL) are compositionally biased toward low complexity.

In terms of assembly, homooligomer and heterooligomer. Interacts with titin/TTN. Interacts with myosins. Interacts with SQSTM1 and NBR1. Probably interacts with TRIM63 and TRIM54. Targeted for degradation through the proteasomal and lysosomal pathways in the presence of SUMO3.

It is found in the nucleus. Its subcellular location is the cytoplasm. It carries out the reaction S-ubiquitinyl-[E2 ubiquitin-conjugating enzyme]-L-cysteine + [acceptor protein]-L-lysine = [E2 ubiquitin-conjugating enzyme]-L-cysteine + N(6)-ubiquitinyl-[acceptor protein]-L-lysine.. E3 ubiquitin ligase that plays an important role in regulating cardiac development and contractility, muscle growth, metabolism, and fiber-type differentiation. Acts as a critical factor that regulates cardiomyocyte size during development in concert with TRIM63 by regulating E2F1-mediated gene expression. Plays a role in apoptosis induction in cardiomyocytes by promoting ubiquitination of the DUSP1 phosphatase. Promotes non-canonical NF-kappa-B signaling and B-cell-mediated immune responses by mediating NFKB2 'Lys-48'-linked ubiquitination and processing. In turn, NFKB2 is further processed by valosin-containing protein/VCP, an ATPase that mediates ubiquitin-dependent protein degradation by the proteasome. May play a role in preventing macrophages from producing inflammatory factors and migrating by downregulating the level of nuclear NF-kappa-B subunit RELA. Also modifies PPARG via polyubiquitination and accelerates PPARG proteasomal degradation to inhibit its activity. In Rattus norvegicus (Rat), this protein is Tripartite motif-containing protein 55 (Trim55).